Consider the following 371-residue polypeptide: Chaperone protein DnaJ (371 aa).

Residues 5-70 (SYYDILGVSK…KKRQAYDQFG (66 aa)) enclose the J domain. The CR-type zinc-finger motif lies at 139 to 217 (GREYKIEIPR…CGGQGLQEKR (79 aa)). Zn(2+)-binding residues include Cys152, Cys155, Cys169, Cys172, Cys191, Cys194, Cys205, and Cys208. CXXCXGXG motif repeat units follow at residues 152 to 159 (CGDCNGSG), 169 to 176 (CPDCGGSG), 191 to 198 (CPTCRGKG), and 205 to 212 (CKTCGGQG).

The protein belongs to the DnaJ family. In terms of assembly, homodimer. It depends on Zn(2+) as a cofactor.

It is found in the cytoplasm. Functionally, participates actively in the response to hyperosmotic and heat shock by preventing the aggregation of stress-denatured proteins and by disaggregating proteins, also in an autonomous, DnaK-independent fashion. Unfolded proteins bind initially to DnaJ; upon interaction with the DnaJ-bound protein, DnaK hydrolyzes its bound ATP, resulting in the formation of a stable complex. GrpE releases ADP from DnaK; ATP binding to DnaK triggers the release of the substrate protein, thus completing the reaction cycle. Several rounds of ATP-dependent interactions between DnaJ, DnaK and GrpE are required for fully efficient folding. Also involved, together with DnaK and GrpE, in the DNA replication of plasmids through activation of initiation proteins. The protein is Chaperone protein DnaJ of Leptospira borgpetersenii serovar Hardjo-bovis (strain JB197).